A 173-amino-acid polypeptide reads, in one-letter code: Lens fiber membrane intrinsic protein (173 aa).

Residues 1 to 3 (MYS) are Cytoplasmic-facing. Residues 4-24 (FMGGGLFCAWVGTILLVVATA) form a helical membrane-spanning segment. Residues 25-66 (TDHWMQYRLSGSFAHQGLWRYCLGNKCFLQTESIAYWNATRA) lie on the Extracellular side of the membrane. 2 C-linked (Man) tryptophan glycosylation sites follow: W43 and W61. N-linked (GlcNAc...) asparagine glycosylation is present at N62. A helical transmembrane segment spans residues 67-87 (FMILSALCATSGIIMGVLAFA). Residues 88–98 (QQSTFTRLSRP) are Cytoplasmic-facing. The chain crosses the membrane as a helical span at residues 99-119 (FSAGIMFFASTLFVLLALAIY). At 120-140 (TGVTVSFLGRRFGDWRFSWSY) the chain is on the extracellular side. A helical membrane pass occupies residues 141 to 161 (ILGWVALLMTFFAGIFYMCAY). At 162–173 (RMHECRRLSTPR) the chain is on the cytoplasmic side. A Phosphoserine modification is found at S170. T171 carries the post-translational modification Phosphothreonine.

The protein belongs to the PMP-22/EMP/MP20 family. In terms of assembly, seems to be associated with itself or another lens membrane component via disulfide bonds. Eye lens specific.

Its subcellular location is the membrane. Present in the thicker 16-17 nm junctions of mammalian lens fiber cells, where it may contribute to cell junctional organization. Acts as a receptor for calmodulin. May play an important role in both lens development and cataractogenesis. This is Lens fiber membrane intrinsic protein (Lim2) from Rattus norvegicus (Rat).